We begin with the raw amino-acid sequence, 499 residues long: Putative antiporter subunit mnhD2 (499 aa).

Transmembrane regions (helical) follow at residues 1-21 (MSNL…ILVF), 31-51 (ILSI…LIYV), 77-97 (LSLL…AYGF), 107-127 (FHLP…FLTS), 129-149 (LFNL…LVTL), 160-180 (IVYV…IGML), 208-228 (ISLV…FMWL), 239-259 (LAAL…IRFF), 272-292 (TLLV…VIAY), 307-327 (IGFI…GAIF), 329-349 (LAND…LVYM), 367-387 (FFGV…PFSG), 402-422 (GNYI…YSLF), and 449-469 (GLLS…PVVL).

The protein belongs to the CPA3 antiporters (TC 2.A.63) subunit D family. As to quaternary structure, may form a heterooligomeric complex that consists of seven subunits: mnhA2, mnhB2, mnhC2, mnhD2, mnhE2, mnhF2 and mnhG2.

It localises to the cell membrane. The chain is Putative antiporter subunit mnhD2 (mnhD2) from Staphylococcus epidermidis (strain ATCC 35984 / DSM 28319 / BCRC 17069 / CCUG 31568 / BM 3577 / RP62A).